The chain runs to 151 residues: HTH-type transcriptional regulator FL11 (151 aa).

In terms of domain architecture, HTH asnC-type spans 5-66; it reads LDDIDKKIIE…VVNPEALGYN (62 aa). Residues 24–43 constitute a DNA-binding region (H-T-H motif); the sequence is LREISKITGLAESTIHERIK. 98–104 contributes to the L-arginine binding site; sequence ETTGDYD. L-lysine contacts are provided by residues Asn-118, Asp-122, and 133 to 135; that span reads THT. Residues Asp-122 and 133-135 contribute to the L-arginine site; that span reads THT.

Homodimer. Binds DNA as a dimer and an octamer.

With respect to regulation, in the famine mode, FL11 forms dimers and acts as a repressor, leading to growth arrest. In the feast mode, in the presence of high concentrations of lysine or arginine, four dimers assemble into an octamer and cover the fl11 and lysine biosynthesis promoters. This leads to the inhibition of fl11 expression and lysine biosynthesis, decrease of the FL11 concentration in the cell, derepression of the target genes and activation of the metabolism. Its function is as follows. DNA-binding protein involved in the repression of transcription of a large number of genes, thereby arresting growth, in response to environmental changes. This chain is HTH-type transcriptional regulator FL11, found in Pyrococcus furiosus (strain ATCC 43587 / DSM 3638 / JCM 8422 / Vc1).